The primary structure comprises 693 residues: UvrABC system protein B (693 aa).

Residues 35-188 (ERIKNGEKDV…DDLLRKFVSM (154 aa)) enclose the Helicase ATP-binding domain. 48–55 (GATGTGKS) contacts ATP. The Beta-hairpin motif lies at 101-124 (YYDYYQPEAYVAQTDTFIEKDSSV). The 167-residue stretch at 438–604 (QIDDLLGEIK…PLRKKIADIT (167 aa)) folds into the Helicase C-terminal domain. Positions 648–683 (VGLIEQLTEQMHAAAGELQFELAARLRDEVGELKKE) constitute a UVR domain.

Belongs to the UvrB family. As to quaternary structure, forms a heterotetramer with UvrA during the search for lesions. Interacts with UvrC in an incision complex.

The protein resides in the cytoplasm. Functionally, the UvrABC repair system catalyzes the recognition and processing of DNA lesions. A damage recognition complex composed of 2 UvrA and 2 UvrB subunits scans DNA for abnormalities. Upon binding of the UvrA(2)B(2) complex to a putative damaged site, the DNA wraps around one UvrB monomer. DNA wrap is dependent on ATP binding by UvrB and probably causes local melting of the DNA helix, facilitating insertion of UvrB beta-hairpin between the DNA strands. Then UvrB probes one DNA strand for the presence of a lesion. If a lesion is found the UvrA subunits dissociate and the UvrB-DNA preincision complex is formed. This complex is subsequently bound by UvrC and the second UvrB is released. If no lesion is found, the DNA wraps around the other UvrB subunit that will check the other stand for damage. The chain is UvrABC system protein B from Arthrobacter sp. (strain FB24).